We begin with the raw amino-acid sequence, 188 residues long: Peptidyl-tRNA hydrolase (188 aa).

Tyr17 contributes to the tRNA binding site. His22 (proton acceptor) is an active-site residue. Positions 65, 67, and 113 each coordinate tRNA.

The protein belongs to the PTH family. In terms of assembly, monomer.

It is found in the cytoplasm. The enzyme catalyses an N-acyl-L-alpha-aminoacyl-tRNA + H2O = an N-acyl-L-amino acid + a tRNA + H(+). Hydrolyzes ribosome-free peptidyl-tRNAs (with 1 or more amino acids incorporated), which drop off the ribosome during protein synthesis, or as a result of ribosome stalling. Its function is as follows. Catalyzes the release of premature peptidyl moieties from peptidyl-tRNA molecules trapped in stalled 50S ribosomal subunits, and thus maintains levels of free tRNAs and 50S ribosomes. The protein is Peptidyl-tRNA hydrolase of Mycoplasma pneumoniae (strain ATCC 29342 / M129 / Subtype 1) (Mycoplasmoides pneumoniae).